A 92-amino-acid polypeptide reads, in one-letter code: Large ribosomal subunit protein eL43 (92 aa).

Residues 39–60 (CSFCGKKAVKRGAAGIWNCSSC) form a C4-type zinc finger.

It belongs to the eukaryotic ribosomal protein eL43 family.

This is Large ribosomal subunit protein eL43 (RPL43) from Eremothecium gossypii (strain ATCC 10895 / CBS 109.51 / FGSC 9923 / NRRL Y-1056) (Yeast).